We begin with the raw amino-acid sequence, 209 residues long: MTEKLKNSKEVIAYIAECFPKCFTLEGEAKPLKIGIFQDLAERLNEDEKVSKTQLRAALRQYTSSWRYLHGVKPGAVRVDLDGNPCGELEEEHVEHAKATLAESKAKVQARRKEQAQKAREEGKAKAKPAANKKPQQPRRTNKPKVQKPTKPVETRALNADEITVGNAVNVNMGKGNMAATIVEINKDDVRVQLANGLQMVVKAEHLRA.

The disordered stretch occupies residues 101–155 (LAESKAKVQARRKEQAQKAREEGKAKAKPAANKKPQQPRRTNKPKVQKPTKPVET). Residues 111–125 (RRKEQAQKAREEGKA) show a composition bias toward basic and acidic residues. Residues 136–148 (QQPRRTNKPKVQK) are compositionally biased toward basic residues.

The protein belongs to the ProQ family.

It localises to the cytoplasm. RNA chaperone with significant RNA binding, RNA strand exchange and RNA duplexing activities. The chain is RNA chaperone ProQ from Vibrio parahaemolyticus serotype O3:K6 (strain RIMD 2210633).